Reading from the N-terminus, the 650-residue chain is Acetyl-coenzyme A synthetase (650 aa).

Residues 191 to 194 (RGGR), Thr311, and Asn335 each bind CoA. ATP-binding positions include 387-389 (GEP), 411-416 (DTWWQT), Asp500, and Arg515. Residue Ser523 participates in CoA binding. Arg526 lines the ATP pocket. Mg(2+) is bound by residues Val537, His539, and Val542. CoA is bound at residue Arg584. Lys609 carries the N6-acetyllysine modification.

It belongs to the ATP-dependent AMP-binding enzyme family. The cofactor is Mg(2+). In terms of processing, acetylated. Deacetylation by the SIR2-homolog deacetylase activates the enzyme.

It catalyses the reaction acetate + ATP + CoA = acetyl-CoA + AMP + diphosphate. Catalyzes the conversion of acetate into acetyl-CoA (AcCoA), an essential intermediate at the junction of anabolic and catabolic pathways. AcsA undergoes a two-step reaction. In the first half reaction, AcsA combines acetate with ATP to form acetyl-adenylate (AcAMP) intermediate. In the second half reaction, it can then transfer the acetyl group from AcAMP to the sulfhydryl group of CoA, forming the product AcCoA. The sequence is that of Acetyl-coenzyme A synthetase from Shewanella amazonensis (strain ATCC BAA-1098 / SB2B).